Here is an 898-residue protein sequence, read N- to C-terminus: Chloride channel protein 2 (898 aa).

The Cytoplasmic portion of the chain corresponds to 1–90; sequence MAAPAAAAVE…RCHKFLVSRV (90 aa). The interval 19–37 is essential for channel gating by both voltage and cell volume; that stretch reads QYEQTLMYGRYTQDLGAFA. The residue at position 23 (Thr-23) is a Phosphothreonine. The interval 39–52 is modulates channel gating by both voltage and cell volume; it reads EEAARIRLGGPEPW. 2 helical membrane-spanning segments follow: residues 91–124 and 133–158; these read GEDW…AQQW and LLLQ…TQIL. The Selectivity filter part_1 signature appears at 164–168; it reads GSGIP. The helical intramembrane region spans 167 to 174; it reads IPEMKTIL. Transmembrane regions (helical) follow at residues 183–201 and 208–226; these read LTLK…ALGS and EGPF…SKFL. The Selectivity filter part_2 signature appears at 206–210; it reads GKEGP. Intramembrane regions (helical) lie at residues 242–254 and 258–266; these read MLAA…VGCC and PIGGVLFSI. Helical transmembrane passes span 278–298, 324–352, 361–380, 432–452, and 460–483; these read YWRG…LAVW, LPAF…VQVM, FLMR…ISTL, ANVF…SALA, and GAFM…MAAW. A Selectivity filter part_3 motif is present at residues 460 to 464; that stretch reads GAFMP. The segment at residues 500 to 514 is an intramembrane region (helical); that stretch reads GGYAVVGAAALAGAV. The note=Loop between two helices intramembrane region spans 515–516; sequence TH. The helical intramembrane region spans 517-528; it reads TVSTAVIVFELT. Positions 529 to 533 form an intramembrane region, note=Loop between two helices; sequence GQIAH. Residues 534-551 traverse the membrane as a helical segment; that stretch reads ILPVMIAVILANAVAQSL. Topologically, residues 552-898 are cytoplasmic; it reads QPSLYDSIIR…SPSDSDDKCQ (347 aa). A CBS 1 domain is found at 587–645; that stretch reads MVRDVPHVALSCTFRDLRLALHRTKGRTLALVESPESMILLGSIERTQVVALLAAQLSP. Residues 647 to 658 show a composition bias toward basic residues; it reads RRRQSKQKRRVA. Residues 647-675 are disordered; that stretch reads RRRQSKQKRRVAHTSPPSCQESPPSPETS. Ser-710 is subject to Phosphoserine. The segment at 726–766 is disordered; that stretch reads FCGSPPPEAASESEKSESSEKRKSKRVRISLASDSDLEGEM. The span at 737–746 shows a compositional bias: basic and acidic residues; the sequence is ESEKSESSEK. The residue at position 758 (Ser-758) is a Phosphoserine. Residues 790 to 850 form the CBS 2 domain; that stretch reads IDPAPFQLVE…GSVTAQGVKV (61 aa). The Basolateral membrane sorting signature appears at 812–813; the sequence is LL. The tract at residues 856–898 is disordered; it reads SFRDSATSSSDTETTEVHALWGPRSRHGLPREGSPSDSDDKCQ.

Belongs to the chloride channel (TC 2.A.49) family. ClC-2/CLCN2 subfamily. As to quaternary structure, homodimer. Interacts with auxiliary subunit HEPACAM. In terms of processing, phosphorylated. Activated by dephosphorylation. Ubiquitously expressed.

Its subcellular location is the cell membrane. The protein resides in the basolateral cell membrane. It localises to the cell projection. The protein localises to the dendritic spine membrane. It is found in the axon. It catalyses the reaction chloride(in) = chloride(out). The catalysed reaction is thiocyanate(in) = thiocyanate(out). It carries out the reaction bromide(in) = bromide(out). The enzyme catalyses nitrate(in) = nitrate(out). It catalyses the reaction iodide(out) = iodide(in). Common gate kinetics are down-regulated by intracellular ATP. Inhibited by AK-42, a derivative of meclofenamate. Inhibited by Cd(2+). Inhibited by Zn(2+) and PKC activation. Inhibited at acidic pH. CCLN2:HEPACAM channel conductance is up-regulated upon hypo-osmolarity. Functionally, voltage-gated and osmosensitive chloride channel. Forms a homodimeric channel where each subunit has its own ion conduction pathway. Conducts double-barreled currents controlled by two types of gates, two fast glutamate gates that control each subunit independently and a slow common gate that opens and shuts off both subunits simultaneously. Displays inward rectification currents activated upon membrane hyperpolarization and extracellular hypotonicity. Contributes to chloride conductance involved in neuron excitability. In hippocampal neurons, generates a significant part of resting membrane conductance and provides an additional chloride efflux pathway to prevent chloride accumulation in dendrites upon GABA receptor activation. In glia, associates with the auxiliary subunit HEPACAM/GlialCAM at astrocytic processes and myelinated fiber tracts where it may regulate transcellular chloride flux buffering extracellular chloride and potassium concentrations. Regulates aldosterone production in adrenal glands. The opening of CLCN2 channels at hyperpolarized membrane potentials in the glomerulosa causes cell membrane depolarization, activation of voltage-gated calcium channels and increased expression of aldosterone synthase, the rate-limiting enzyme for aldosterone biosynthesis. Contributes to chloride conductance in retinal pigment epithelium involved in phagocytosis of shed photoreceptor outer segments and photoreceptor renewal. Conducts chloride currents at the basolateral membrane of epithelial cells with a role in chloride reabsorption rather than secretion. Permeable to small monovalent anions with chloride &gt; thiocyanate &gt; bromide &gt; nitrate &gt; iodide ion selectivity. The protein is Chloride channel protein 2 (CLCN2) of Oryctolagus cuniculus (Rabbit).